The sequence spans 454 residues: Growth/differentiation factor 9 (454 aa).

The N-terminal stretch at 1–24 (MARPNKFLLWFCCFAWLCFPISLG) is a signal peptide. The propeptide occupies 25-319 (SQASGGEAQI…GRSSHHRHRR (295 aa)). N-linked (GlcNAc...) asparagine glycans are attached at residues N106, N163, N236, N255, and N268. A disordered region spans residues 303 to 330 (GEEAAEDGRSSHHRHRRGQETVSSELKK). S325 carries the phosphoserine; by CK modification. An N-linked (GlcNAc...) asparagine glycan is attached at N338. Disulfide bonds link C353–C419, C382–C451, and C386–C453.

The protein belongs to the TGF-beta family. As to quaternary structure, homodimer or heterodimer (Potential). But, in contrast to other members of this family, cannot be disulfide-linked. In terms of processing, phosphorylated; phosphorylation is critical for GDF9 function. In vitro, can be phosphorylated by CK at Ser-325. As to expression, expressed in ovarian granulosa cells. Present in oocytes of primary follicles (at protein level).

The protein resides in the secreted. Functionally, required for ovarian folliculogenesis. Promotes primordial follicle development. Stimulates granulosa cell proliferation. Promotes cell transition from G0/G1 to S and G2/M phases, through an increase of CCND1 and CCNE1 expression, and RB1 phosphorylation. It regulates STAR expression and cAMP-dependent progesterone release in granulosa and thecal cells. Attenuates the suppressive effects of activin A on STAR expression and progesterone production by increasing the expression of inhibin B. It suppresses FST and FSTL3 production in granulosa-lutein cells. This is Growth/differentiation factor 9 (GDF9) from Homo sapiens (Human).